We begin with the raw amino-acid sequence, 209 residues long: Vacuolar protein sorting-associated protein 28 homolog 1 (209 aa).

One can recognise a VPS28 N-terminal domain in the interval 1–99 (MEVKLWNDKR…TSGVPATVEH (99 aa)). A VPS28 C-terminal domain is found at 109 to 205 (SSASVVAECV…SYNSFMAALP (97 aa)).

This sequence belongs to the VPS28 family. Component of the endosomal sorting required for transport complex I (ESCRT-I), composed of ELC, VPS28 and VPS37. Interacts with ELC.

The protein resides in the endosome. Functionally, component of the ESCRT-I complex (endosomal sorting complex required for transport I), a regulator of vesicular trafficking process. Required for the sorting of endocytic ubiquitinated cargos into multivesicular bodies (MVBs). Mediates the association to the ESCRT-0 complex. This Arabidopsis thaliana (Mouse-ear cress) protein is Vacuolar protein sorting-associated protein 28 homolog 1 (VPS28-1).